Consider the following 260-residue polypeptide: Kallikrein-8 (260 aa).

Residues Met1–Ala28 form the signal peptide. Residues Gln29–Lys32 constitute a propeptide that is removed on maturation. Residues Ile33–Gly257 form the Peptidase S1 domain. Cystine bridges form between Cys39/Cys173, Cys58/Cys74, Cys145/Cys246, Cys152/Cys218, Cys184/Cys198, and Cys208/Cys233. His73 functions as the Charge relay system in the catalytic mechanism. Asn110 carries an N-linked (GlcNAc...) asparagine glycan. Residue Asp120 is the Charge relay system of the active site. Residue Ser212 is the Charge relay system of the active site.

This sequence belongs to the peptidase S1 family. Kallikrein subfamily. Interacts with SPINK9. In terms of tissue distribution, restricted to hippocampus.

The protein localises to the secreted. The protein resides in the cytoplasm. The catalysed reaction is Cleavage of amide substrates following the basic amino acids Arg or Lys at the P1 position, with a preference for Arg over Lys.. Its function is as follows. Serine protease which is capable of degrading a number of proteins such as casein, fibrinogen, kininogen, fibronectin and collagen type IV. Also cleaves L1CAM in response to increased neural activity. Induces neurite outgrowth and fasciculation of cultured hippocampal neurons. Plays a role in the formation and maturation of orphan and small synaptic boutons in the Schaffer-collateral pathway, regulates Schaffer-collateral long-term potentiation in the hippocampus and is required for memory acquisition and synaptic plasticity. Involved in skin desquamation and keratinocyte proliferation. Plays a role in the secondary phase of pathogenesis following spinal cord injury. The polypeptide is Kallikrein-8 (Klk8) (Rattus norvegicus (Rat)).